Reading from the N-terminus, the 580-residue chain is 3-(3-hydroxy-phenyl)propionate/3-hydroxycinnamic acid hydroxylase (580 aa).

Residues 14 to 43 (DVLV…VVEE) and 291 to 301 (FRRGRLLLAGD) contribute to the FAD site.

The protein belongs to the PheA/TfdB FAD monooxygenase family. The cofactor is FAD.

It carries out the reaction 3-(3-hydroxyphenyl)propanoate + NADH + O2 + H(+) = 3-(2,3-dihydroxyphenyl)propanoate + NAD(+) + H2O. The catalysed reaction is (2E)-3-(3-hydroxyphenyl)prop-2-enoate + NADH + O2 + H(+) = (2E)-3-(2,3-dihydroxyphenyl)prop-2-enoate + NAD(+) + H2O. The protein operates within aromatic compound metabolism; 3-phenylpropanoate degradation. Functionally, catalyzes the insertion of one atom of molecular oxygen into position 2 of the phenyl ring of 3-(3-hydroxyphenyl)propionate (3-HPP) and hydroxycinnamic acid (3HCI). The chain is 3-(3-hydroxy-phenyl)propionate/3-hydroxycinnamic acid hydroxylase from Mycobacterium avium (strain 104).